Reading from the N-terminus, the 291-residue chain is ATP synthase gamma chain (291 aa).

The protein belongs to the ATPase gamma chain family. As to quaternary structure, F-type ATPases have 2 components, CF(1) - the catalytic core - and CF(0) - the membrane proton channel. CF(1) has five subunits: alpha(3), beta(3), gamma(1), delta(1), epsilon(1). CF(0) has three main subunits: a, b and c.

It localises to the cell inner membrane. In terms of biological role, produces ATP from ADP in the presence of a proton gradient across the membrane. The gamma chain is believed to be important in regulating ATPase activity and the flow of protons through the CF(0) complex. The sequence is that of ATP synthase gamma chain from Burkholderia ambifaria (strain MC40-6).